Here is a 328-residue protein sequence, read N- to C-terminus: Phenylalanine--tRNA ligase alpha subunit (328 aa).

Residue Glu-245 participates in Mg(2+) binding.

The protein belongs to the class-II aminoacyl-tRNA synthetase family. Phe-tRNA synthetase alpha subunit type 1 subfamily. In terms of assembly, tetramer of two alpha and two beta subunits. The cofactor is Mg(2+).

It is found in the cytoplasm. The catalysed reaction is tRNA(Phe) + L-phenylalanine + ATP = L-phenylalanyl-tRNA(Phe) + AMP + diphosphate + H(+). The chain is Phenylalanine--tRNA ligase alpha subunit from Helicobacter pylori (strain Shi470).